A 258-amino-acid polypeptide reads, in one-letter code: UPF0246 protein CGSHiGG_08495 (258 aa).

Belongs to the UPF0246 family.

This Haemophilus influenzae (strain PittGG) protein is UPF0246 protein CGSHiGG_08495.